Reading from the N-terminus, the 466-residue chain is Alpha-1A adrenergic receptor (466 aa).

Residues 1-25 (MVFLSGNASDSSNCTQPPAPVNIPK) lie on the Extracellular side of the membrane. Asn7 and Asn13 each carry an N-linked (GlcNAc...) asparagine glycan. A helical transmembrane segment spans residues 26-51 (AILLGVILGVLILFGVPGNILVILSV). The Cytoplasmic portion of the chain corresponds to 52–63 (ACHRHLHSVTHY). Residues 64–89 (YIVNLAVADLLLTSTVLPFSAIFEIL) traverse the membrane as a helical segment. Topologically, residues 90 to 99 (GYWAFGRVFC) are extracellular. Residues 100–122 (NIWAAVDVLCCTASIMSLCIISI) form a helical membrane-spanning segment. At 123–143 (DRYIGVSYPLRYPTIVTQRRG) the chain is on the cytoplasmic side. Residues 144-168 (LRALLCLWALSLVISIGPLFGWRQP) traverse the membrane as a helical segment. Residues 169–181 (APQDETICQINED) lie on the Extracellular side of the membrane. A helical membrane pass occupies residues 182–205 (PSYVLFSALGSFYVPLAIILVMYC). Residues 206–272 (RVYVVAKRES…KFSREKKAAK (67 aa)) are Cytoplasmic-facing. The helical transmembrane segment at 273 to 297 (TLGIVVGCFVLCWLPFFLVMPIGSF) threads the bilayer. The Extracellular portion of the chain corresponds to 298 to 304 (FPDFKPS). A helical membrane pass occupies residues 305-329 (ETVFKIVFWLGYLNSCINPIIYPCS). Residues 330–466 (SQEFKKAFQN…ISLSENGEEV (137 aa)) lie on the Cytoplasmic side of the membrane. A Nuclear localization signal motif is present at residues 334–349 (KKAFQNVLKIQCLRRK). The S-palmitoyl cysteine moiety is linked to residue Cys345.

Belongs to the G-protein coupled receptor 1 family. Adrenergic receptor subfamily. ADRA1A sub-subfamily. As to quaternary structure, homo- and heterooligomer. Heterooligomerizes with ADRA1B homooligomers in cardiac myocytes. Interacts with CAVIN4.

It localises to the nucleus membrane. The protein resides in the cell membrane. The protein localises to the cytoplasm. Its subcellular location is the membrane. It is found in the caveola. Its function is as follows. This alpha-adrenergic receptor mediates its action by association with G proteins that activate a phosphatidylinositol-calcium second messenger system. Its effect is mediated by G(q) and G(11) proteins. Nuclear ADRA1A-ADRA1B heterooligomers regulate phenylephrine (PE)-stimulated ERK signaling in cardiac myocytes. This Cavia porcellus (Guinea pig) protein is Alpha-1A adrenergic receptor (ADRA1A).